We begin with the raw amino-acid sequence, 130 residues long: Protein Wnt-9 (130 aa).

The O-palmitoleoyl serine; by PORCN moiety is linked to residue Ser-1. The interval 41 to 69 is disordered; it reads AGERTIARSRRRPREQRGQRRPKVSDGAL. Residues 47 to 62 show a composition bias toward basic residues; it reads ARSRRRPREQRGQRRP. The N-linked (GlcNAc...) asparagine glycan is linked to Asn-97. Cysteines 100 and 111 form a disulfide.

Belongs to the Wnt family. Palmitoleoylation is required for efficient binding to frizzled receptors. Depalmitoleoylation leads to Wnt signaling pathway inhibition.

It localises to the secreted. The protein localises to the extracellular space. It is found in the extracellular matrix. In terms of biological role, ligand for members of the frizzled family of seven transmembrane receptors. Probable developmental protein. May be a signaling molecule which affects the development of discrete regions of tissues. Is likely to signal over only few cell diameters. The polypeptide is Protein Wnt-9 (WNT-9) (Eptatretus stoutii (Pacific hagfish)).